The chain runs to 1018 residues: MEDEEGPEYGKPDFVLLDQVTMEDFMRNLQLRFEKGRIYTYIGEVLVSVNPYQELPLYGPEAIARYQGRELYERPPHLYAVANAAYKAMKHRSRDTCIVISGESGAGKTEASKHIMQYIAAVTNPSQRAEVERVKDVLLKSTCVLEAFGNARTNRNHNSSRFGKYMDINFDFKGDPIGGHIHSYLLEKSRVLKQHVGERNFHAFYQLLRGSEDKQLHELHLERNPAVYNFTHQGAGLNMTVHSALDSDEQSHQAVTEAMRVIGFSPEEVESVHRILAAILHLGNIEFVETEEGGLQKEGLAVAEEALVDHVAELTATPRDLVLRSLLARTVASGGRELIEKGHTAAEASYARDACAKAVYQRLFEWVVNRINSVMEPRGRDPRRDGKDTVIGVLDIYGFEVFPVNSFEQFCINYCNEKLQQLFIQLILKQEQEEYEREGITWQSVEYFNNATIVDLVERPHRGILAVLDEACSSAGTITDRIFLQTLDMHHRHHLHYTSRQLCPTDKTMEFGRDFRIKHYAGDVTYSVEGFIDKNRDFLFQDFKRLLYNSTDPTLRAMWPDGQQDITEVTKRPLTAGTLFKNSMVALVENLASKEPFYVRCIKPNEDKVAGKLDENHCRHQVAYLGLLENVRVRRAGFASRQPYSRFLLRYKMTCEYTWPNHLLGSDKAAVSALLEQHGLQGDVAFGHSKLFIRSPRTLVTLEQSRARLIPIIVLLLQKAWRGTLARWRCRRLRAIYTIMRWFRRHKVRAHLAELQRRFQAARQPPLYGRDLVWPLPPAVLQPFQDTCHALFCRWRARQLVKNIPPSDMPQIKAKVAAMGALQGLRQDWGCRRAWARDYLSSATDNPTASSLFAQRLKTLQDKDGFGAVLFSSHVRKVNRFHKIRNRALLLTDQHLYKLDPDRQYRVMRAVPLEAVTGLSVTSGGDQLVVLHARGQDDLVVCLHRSRPPLDNRVGELVGVLAAHCQGEGRTLEVRVSDCIPLSHRGVRRLISVEPRPEQPEPDFRCARGSFTLLWPSR.

The residue at position 1 (Met1) is an N-acetylmethionine. A Myosin motor domain is found at 9 to 707 (YGKPDFVLLD…TLVTLEQSRA (699 aa)). An ATP-binding site is contributed by 102–109 (GESGAGKT). Residues 584-606 (MVALVENLASKEPFYVRCIKPNE) are actin-binding. The IQ domain maps to 710 to 739 (IPIIVLLLQKAWRGTLARWRCRRLRAIYTI). The 194-residue stretch at 824 to 1017 (GLRQDWGCRR…RGSFTLLWPS (194 aa)) folds into the TH1 domain.

This sequence belongs to the TRAFAC class myosin-kinesin ATPase superfamily. Myosin family. As to quaternary structure, interacts with calmodulin; via its IQ motifs. In terms of tissue distribution, specifically expressed in hematopoietic cells.

The protein localises to the cell membrane. The protein resides in the cell projection. Its subcellular location is the phagocytic cup. In terms of biological role, unconventional myosin required during immune response for detection of rare antigen-presenting cells by regulating T-cell migration. Unconventional myosins are actin-based motor molecules with ATPase activity and serve in intracellular movements. Acts as a regulator of T-cell migration by generating membrane tension, enforcing cell-intrinsic meandering search, thereby enhancing detection of rare antigens during lymph-node surveillance, enabling pathogen eradication. Also required in B-cells, where it regulates different membrane/cytoskeleton-dependent processes. Involved in Fc-gamma receptor (Fc-gamma-R) phagocytosis. Constitutes the minor histocompatibility antigen HA-2. More generally, minor histocompatibility antigens (mHags) refer to immunogenic peptide which, when complexed with MHC, can generate an immune response after recognition by specific T-cells. The peptides are derived from polymorphic intracellular proteins, which are cleaved by normal pathways of antigen processing. The binding of these peptides to MHC class I or class II molecules and their expression on the cell surface can stimulate T-cell responses and thereby trigger graft rejection or graft-versus-host disease (GVHD) after hematopoietic stem cell transplantation from HLA-identical sibling donor. GVHD is a frequent complication after bone marrow transplantation (BMT), due to mismatch of minor histocompatibility antigen in HLA-matched sibling marrow transplants. HA-2 is restricted to MHC class I HLA-A*0201. This Homo sapiens (Human) protein is Unconventional myosin-Ig (MYO1G).